A 467-amino-acid chain; its full sequence is Glutamate--tRNA ligase (467 aa).

The 'HIGH' region signature appears at 9 to 19 (PSPTGYLHIGG). A 'KMSKS' region motif is present at residues 237–241 (KLSKR). Lys-240 lines the ATP pocket.

It belongs to the class-I aminoacyl-tRNA synthetase family. Glutamate--tRNA ligase type 1 subfamily. Monomer.

The protein resides in the cytoplasm. It catalyses the reaction tRNA(Glu) + L-glutamate + ATP = L-glutamyl-tRNA(Glu) + AMP + diphosphate. Functionally, catalyzes the attachment of glutamate to tRNA(Glu) in a two-step reaction: glutamate is first activated by ATP to form Glu-AMP and then transferred to the acceptor end of tRNA(Glu). The polypeptide is Glutamate--tRNA ligase (Xylella fastidiosa (strain 9a5c)).